The chain runs to 118 residues: uncharacterized protein (118 aa).

This sequence belongs to the HesB/IscA family. Ycf83 subfamily.

This is an uncharacterized protein from Synechocystis sp. (strain ATCC 27184 / PCC 6803 / Kazusa).